The chain runs to 370 residues: 4-hydroxy-3-methylbut-2-en-1-yl diphosphate synthase (flavodoxin) (370 aa).

[4Fe-4S] cluster contacts are provided by C268, C271, C303, and E310.

This sequence belongs to the IspG family. It depends on [4Fe-4S] cluster as a cofactor.

The enzyme catalyses (2E)-4-hydroxy-3-methylbut-2-enyl diphosphate + oxidized [flavodoxin] + H2O + 2 H(+) = 2-C-methyl-D-erythritol 2,4-cyclic diphosphate + reduced [flavodoxin]. It functions in the pathway isoprenoid biosynthesis; isopentenyl diphosphate biosynthesis via DXP pathway; isopentenyl diphosphate from 1-deoxy-D-xylulose 5-phosphate: step 5/6. In terms of biological role, converts 2C-methyl-D-erythritol 2,4-cyclodiphosphate (ME-2,4cPP) into 1-hydroxy-2-methyl-2-(E)-butenyl 4-diphosphate. This chain is 4-hydroxy-3-methylbut-2-en-1-yl diphosphate synthase (flavodoxin), found in Bacillus licheniformis (strain ATCC 14580 / DSM 13 / JCM 2505 / CCUG 7422 / NBRC 12200 / NCIMB 9375 / NCTC 10341 / NRRL NRS-1264 / Gibson 46).